The chain runs to 264 residues: Pyridoxine 5'-phosphate synthase (264 aa).

The segment covering 1–21 has biased composition (polar residues); that stretch reads MTDTAQILPTTLEQNPQNTSK. The interval 1-22 is disordered; the sequence is MTDTAQILPTTLEQNPQNTSKK. Residue N28 participates in 3-amino-2-oxopropyl phosphate binding. 1-deoxy-D-xylulose 5-phosphate is bound at residue 30–31; sequence DH. R39 provides a ligand contact to 3-amino-2-oxopropyl phosphate. H64 functions as the Proton acceptor in the catalytic mechanism. Residues R66 and H71 each contribute to the 1-deoxy-D-xylulose 5-phosphate site. Residue E91 is the Proton acceptor of the active site. T121 lines the 1-deoxy-D-xylulose 5-phosphate pocket. H217 functions as the Proton donor in the catalytic mechanism. 3-amino-2-oxopropyl phosphate contacts are provided by residues G218 and 239 to 240; that span reads GH.

Belongs to the PNP synthase family. In terms of assembly, homooctamer; tetramer of dimers.

The protein localises to the cytoplasm. It catalyses the reaction 3-amino-2-oxopropyl phosphate + 1-deoxy-D-xylulose 5-phosphate = pyridoxine 5'-phosphate + phosphate + 2 H2O + H(+). Its pathway is cofactor biosynthesis; pyridoxine 5'-phosphate biosynthesis; pyridoxine 5'-phosphate from D-erythrose 4-phosphate: step 5/5. Its function is as follows. Catalyzes the complicated ring closure reaction between the two acyclic compounds 1-deoxy-D-xylulose-5-phosphate (DXP) and 3-amino-2-oxopropyl phosphate (1-amino-acetone-3-phosphate or AAP) to form pyridoxine 5'-phosphate (PNP) and inorganic phosphate. This Psychrobacter cryohalolentis (strain ATCC BAA-1226 / DSM 17306 / VKM B-2378 / K5) protein is Pyridoxine 5'-phosphate synthase.